A 220-amino-acid chain; its full sequence is Glutathione S-transferase-like protein FUS3 (220 aa).

In terms of domain architecture, GST N-terminal spans 3–84 (SFGTLYTYMP…YVAQSGPQAS (82 aa)). Residues 90–220 (DAMSSAKIRQ…LIEKRRIGAK (131 aa)) enclose the GST C-terminal domain.

It belongs to the GST superfamily.

Its function is as follows. Glutathione S-transferase-like protein; part of the gene cluster that mediates the biosynthesis of the mycotoxin fusarin C. Within the cluster, FUS1, FUS2, FUS8 and FUS9 are sufficient for fusarin production. The other FUS cluster members are not essential for fusarin C biosynthesis. This Gibberella moniliformis (strain M3125 / FGSC 7600) (Maize ear and stalk rot fungus) protein is Glutathione S-transferase-like protein FUS3.